The chain runs to 617 residues: Type VII secretion systems protein EssD (617 aa).

A disordered region spans residues 420–448 (QNHVTHGPKDSMVRSEGKHSISSHEMNSS). The span at 426–438 (GPKDSMVRSEGKH) shows a compositional bias: basic and acidic residues.

It belongs to the EssD family. Interacts (via C-terminal) with EssG; this interaction blocks EssD activity. Interacts with EssE.

The protein resides in the secreted. It localises to the cell membrane. Functionally, component of the type VII secretion system (Ess). Plays a role in Ess secretion during infection. Required for the efficient secretion of EsxA. Required for abscess formation and staphylococcal persistence in host tissue. Possesses a toxic DNase activity that is modulated by EssG by forming a nuclease toxin-antitoxin pair. This nuclease toxin targets competitor bacteria. This chain is Type VII secretion systems protein EssD, found in Staphylococcus aureus (strain Newman).